Here is a 353-residue protein sequence, read N- to C-terminus: Holliday junction branch migration complex subunit RuvB (353 aa).

The segment at 4 to 185 is large ATPase domain (RuvB-L); it reads ADRLITAAGG…FGIVQRLEFY (182 aa). ATP contacts are provided by residues isoleucine 24, arginine 25, glycine 66, lysine 69, threonine 70, threonine 71, 132-134, arginine 175, tyrosine 185, and arginine 222; that span reads EDF. Threonine 70 lines the Mg(2+) pocket. Positions 186–256 are small ATPAse domain (RuvB-S); the sequence is NIADLSTIVS…TADKALNLLD (71 aa). The head domain (RuvB-H) stretch occupies residues 259-353; it reads EHGFDHQDRR…DDVVDDPADL (95 aa). DNA is bound by residues arginine 295, arginine 314, and arginine 319.

The protein belongs to the RuvB family. In terms of assembly, homohexamer. Forms an RuvA(8)-RuvB(12)-Holliday junction (HJ) complex. HJ DNA is sandwiched between 2 RuvA tetramers; dsDNA enters through RuvA and exits via RuvB. An RuvB hexamer assembles on each DNA strand where it exits the tetramer. Each RuvB hexamer is contacted by two RuvA subunits (via domain III) on 2 adjacent RuvB subunits; this complex drives branch migration. In the full resolvosome a probable DNA-RuvA(4)-RuvB(12)-RuvC(2) complex forms which resolves the HJ.

The protein localises to the cytoplasm. It carries out the reaction ATP + H2O = ADP + phosphate + H(+). In terms of biological role, the RuvA-RuvB-RuvC complex processes Holliday junction (HJ) DNA during genetic recombination and DNA repair, while the RuvA-RuvB complex plays an important role in the rescue of blocked DNA replication forks via replication fork reversal (RFR). RuvA specifically binds to HJ cruciform DNA, conferring on it an open structure. The RuvB hexamer acts as an ATP-dependent pump, pulling dsDNA into and through the RuvAB complex. RuvB forms 2 homohexamers on either side of HJ DNA bound by 1 or 2 RuvA tetramers; 4 subunits per hexamer contact DNA at a time. Coordinated motions by a converter formed by DNA-disengaged RuvB subunits stimulates ATP hydrolysis and nucleotide exchange. Immobilization of the converter enables RuvB to convert the ATP-contained energy into a lever motion, pulling 2 nucleotides of DNA out of the RuvA tetramer per ATP hydrolyzed, thus driving DNA branch migration. The RuvB motors rotate together with the DNA substrate, which together with the progressing nucleotide cycle form the mechanistic basis for DNA recombination by continuous HJ branch migration. Branch migration allows RuvC to scan DNA until it finds its consensus sequence, where it cleaves and resolves cruciform DNA. The chain is Holliday junction branch migration complex subunit RuvB from Pseudomonas savastanoi pv. phaseolicola (strain 1448A / Race 6) (Pseudomonas syringae pv. phaseolicola (strain 1448A / Race 6)).